Reading from the N-terminus, the 154-residue chain is SsrA-binding protein (154 aa).

This sequence belongs to the SmpB family.

The protein localises to the cytoplasm. Required for rescue of stalled ribosomes mediated by trans-translation. Binds to transfer-messenger RNA (tmRNA), required for stable association of tmRNA with ribosomes. tmRNA and SmpB together mimic tRNA shape, replacing the anticodon stem-loop with SmpB. tmRNA is encoded by the ssrA gene; the 2 termini fold to resemble tRNA(Ala) and it encodes a 'tag peptide', a short internal open reading frame. During trans-translation Ala-aminoacylated tmRNA acts like a tRNA, entering the A-site of stalled ribosomes, displacing the stalled mRNA. The ribosome then switches to translate the ORF on the tmRNA; the nascent peptide is terminated with the 'tag peptide' encoded by the tmRNA and targeted for degradation. The ribosome is freed to recommence translation, which seems to be the essential function of trans-translation. This chain is SsrA-binding protein, found in Synechococcus sp. (strain JA-3-3Ab) (Cyanobacteria bacterium Yellowstone A-Prime).